We begin with the raw amino-acid sequence, 2145 residues long: Glutamate synthase [NADH] (2145 aa).

Positions 1–53 are excised as a propeptide; sequence MPVLKSDNFDPLEEAYEGGTIQNYNDEHHLHKSWANVIPDKRGLYDPDYEHDA. The active-site For GATase activity is the C54. Residues 54-455 form the Glutamine amidotransferase type-2 domain; sequence CGVGFVANKH…PGDLFLVDTQ (402 aa). 1132 to 1189 contributes to the FMN binding site; it reads LAETHQTLVLNDLRRNVVVQTDGQLRTGFDIAVAVLLGAESFTLATVPLIAMGCVMLR. Residues C1185, C1191, and C1196 each coordinate [3Fe-4S] cluster. A coiled-coil region spans residues 1551–1600; it reads KKVLLKEKAEAAKAKAKATSEYLKKFRSNQEVDDEVNTLLIANQKAKEQE. Position 1928 to 1942 (1928 to 1942) interacts with NAD(+); the sequence is GGGDTGNDCLGTSVR. T2070 carries the phosphothreonine modification.

This sequence belongs to the glutamate synthase family. Homotrimer. It depends on [3Fe-4S] cluster as a cofactor. Requires FAD as cofactor. FMN is required as a cofactor.

The enzyme catalyses 2 L-glutamate + NAD(+) = L-glutamine + 2-oxoglutarate + NADH + H(+). Its pathway is amino-acid biosynthesis; L-glutamate biosynthesis via GLT pathway; L-glutamate from 2-oxoglutarate and L-glutamine (NAD(+) route): step 1/1. The protein operates within energy metabolism; nitrogen metabolism. Inhibited by homocysteine sulfonamide. In terms of biological role, forms L-glutamate from L-glutamine and 2-oxoglutarate. Represents an alternative pathway to L-glutamate dehydrogenase for the biosynthesis of L-glutamate. Participates with glutamine synthetase in ammonia assimilation processes. The enzyme is specific for NADH, L-glutamine and 2-oxoglutarate. The protein is Glutamate synthase [NADH] (GLT1) of Saccharomyces cerevisiae (strain ATCC 204508 / S288c) (Baker's yeast).